Consider the following 655-residue polypeptide: p-hydroxybenzoic acid efflux pump subunit AaeB (655 aa).

Transmembrane regions (helical) follow at residues 13 to 33, 38 to 58, 69 to 89, 93 to 113, 121 to 141, 152 to 172, 370 to 390, 407 to 427, 431 to 451, 459 to 479, and 482 to 502; these read FAVK…HFQL, WAVL…GGEP, LRII…IAMI, LLMI…SSLV, WGLA…EPLL, EIVI…PRSI, LFWL…IAVV, FIYG…VIIP, QSML…GIEV, MGAL…TFHF, and FLDS…VILL.

It belongs to the aromatic acid exporter ArAE (TC 2.A.85) family.

The protein localises to the cell inner membrane. Functionally, forms an efflux pump with AaeA. Could function as a metabolic relief valve, allowing to eliminate certain compounds when they accumulate to high levels in the cell. This Escherichia coli (strain SMS-3-5 / SECEC) protein is p-hydroxybenzoic acid efflux pump subunit AaeB.